The primary structure comprises 750 residues: GTP pyrophosphokinase rsh (750 aa).

An HD domain is found at 45–144; the sequence is YFSHPLEVAA…VKLADRLHNM (100 aa). The region spanning 390-451 is the TGS domain; sequence DQVFCFTPKG…KNGDEVDIIR (62 aa). Residues 587–613 form a disordered region; the sequence is AAKVDPAATTPKPGKRALPIRGTNPDL. The ACT domain occupies 676–750; sequence RISVSAINSP…SVSSAKRVNG (75 aa).

It belongs to the RelA/SpoT family.

The catalysed reaction is GTP + ATP = guanosine 3'-diphosphate 5'-triphosphate + AMP. Functionally, functions as a (p)ppGpp synthase. In eubacteria ppGpp (guanosine 3'-diphosphate 5'-diphosphate) is a mediator of the stringent response that coordinates a variety of cellular activities in response to changes in nutritional abundance. It is necessary for persistence in mice, essential for intracellular growth of Brucella and required for expression of the type IV secretion system VirB and therefore plays a role in adaptation of Brucella to its intracellular host environment. The sequence is that of GTP pyrophosphokinase rsh (rsh) from Brucella suis biovar 1 (strain 1330).